The chain runs to 92 residues: Small ribosomal subunit protein uS19 (92 aa).

It belongs to the universal ribosomal protein uS19 family.

Functionally, protein S19 forms a complex with S13 that binds strongly to the 16S ribosomal RNA. The sequence is that of Small ribosomal subunit protein uS19 from Lysinibacillus sphaericus (strain C3-41).